The primary structure comprises 543 residues: Methionine--tRNA ligase (543 aa).

The 'HIGH' region motif lies at 13 to 23 (PYANGPLHVGH). 4 residues coordinate Zn(2+): Cys145, Cys148, Cys158, and Cys161. Positions 334-338 (QFSKS) match the 'KMSKS' region motif. Residue Lys337 coordinates ATP.

Belongs to the class-I aminoacyl-tRNA synthetase family. MetG type 1 subfamily. It depends on Zn(2+) as a cofactor.

Its subcellular location is the cytoplasm. It catalyses the reaction tRNA(Met) + L-methionine + ATP = L-methionyl-tRNA(Met) + AMP + diphosphate. In terms of biological role, is required not only for elongation of protein synthesis but also for the initiation of all mRNA translation through initiator tRNA(fMet) aminoacylation. This Thermoplasma volcanium (strain ATCC 51530 / DSM 4299 / JCM 9571 / NBRC 15438 / GSS1) protein is Methionine--tRNA ligase.